A 530-amino-acid polypeptide reads, in one-letter code: Autoinducer-2 kinase (530 aa).

The protein belongs to the FGGY kinase family.

It localises to the cytoplasm. It catalyses the reaction (S)-4,5-dihydroxypentane-2,3-dione + ATP = (2S)-2-hydroxy-3,4-dioxopentyl phosphate + ADP + H(+). Its function is as follows. Catalyzes the phosphorylation of autoinducer-2 (AI-2) to phospho-AI-2, which subsequently inactivates the transcriptional regulator LsrR and leads to the transcription of the lsr operon. Phosphorylates the ring-open form of (S)-4,5-dihydroxypentane-2,3-dione (DPD), which is the precursor to all AI-2 signaling molecules, at the C5 position. This chain is Autoinducer-2 kinase, found in Salmonella paratyphi A (strain ATCC 9150 / SARB42).